The chain runs to 589 residues: Serine/threonine-protein kinase shk2 (589 aa).

Residues 23–125 (GIIRSGWVML…WMDLISSRAL (103 aa)) enclose the PH domain. Positions 129-142 (VSSPMNPKHQVHVG) constitute a CRIB domain. Positions 309 to 566 (FNVKHKLGQG…AAELLTHSFL (258 aa)) constitute a Protein kinase domain. Residues 315–323 (LGQGASGSV) and lysine 343 each bind ATP. Catalysis depends on aspartate 434, which acts as the Proton acceptor.

It belongs to the protein kinase superfamily. STE Ser/Thr protein kinase family. STE20 subfamily.

The catalysed reaction is L-seryl-[protein] + ATP = O-phospho-L-seryl-[protein] + ADP + H(+). It catalyses the reaction L-threonyl-[protein] + ATP = O-phospho-L-threonyl-[protein] + ADP + H(+). Its function is as follows. Forms an activated complex with GTP-bound Ras-like cdc42. Participates in Ras-dependent morphological control and mating response pathways. The chain is Serine/threonine-protein kinase shk2 (shk2) from Schizosaccharomyces pombe (strain 972 / ATCC 24843) (Fission yeast).